The following is a 398-amino-acid chain: Lysophospholipid transporter LplT (398 aa).

A run of 11 helical transmembrane segments spans residues 17-37 (AVLVSQFFSAFADNALLFAIL), 52-72 (ILQIVFVLAYILLAPFVGQIA), 90-110 (LGAFTICLGYDPFLGYALVGV), 137-157 (GLMEASTIIAILTGSVVGGFL), 163-183 (AIALLVCALMYGIAVVANFFI), 226-246 (LFWGAGITLRFLLVLWVPVVL), 256-276 (ILNVMVAVGIIIGAGAAARFI), 285-305 (MPAGVLIGVMVVIFAVQHSIW), 309-329 (VLLIILGIFGGLFIVPLNALL), 352-372 (IAMLLMLGLYSLVIKIGVPVV), and 373-393 (TTGIGFGTLLALTITSLWIWN).

Belongs to the major facilitator superfamily. LplT (TC 2.A.1.42) family.

It localises to the cell inner membrane. Catalyzes the facilitated diffusion of 2-acyl-glycero-3-phosphoethanolamine (2-acyl-GPE) into the cell. The protein is Lysophospholipid transporter LplT of Photorhabdus laumondii subsp. laumondii (strain DSM 15139 / CIP 105565 / TT01) (Photorhabdus luminescens subsp. laumondii).